We begin with the raw amino-acid sequence, 384 residues long: 5-amino-6-(D-ribitylamino)uracil--L-tyrosine 4-hydroxyphenyl transferase 2 (384 aa).

In terms of domain architecture, Radical SAM core spans V53 to T286. The [4Fe-4S] cluster site is built by C67, C71, and C74.

It belongs to the radical SAM superfamily. CofH family. Consists of two subunits, CofG and CofH. The cofactor is [4Fe-4S] cluster.

The enzyme catalyses 5-amino-6-(D-ribitylamino)uracil + L-tyrosine + S-adenosyl-L-methionine = 5-amino-5-(4-hydroxybenzyl)-6-(D-ribitylimino)-5,6-dihydrouracil + 2-iminoacetate + 5'-deoxyadenosine + L-methionine + H(+). It participates in cofactor biosynthesis; coenzyme F0 biosynthesis. Functionally, catalyzes the radical-mediated synthesis of 5-amino-5-(4-hydroxybenzyl)-6-(D-ribitylimino)-5,6-dihydrouracil from 5-amino-6-(D-ribitylamino)uracil and L-tyrosine. The protein is 5-amino-6-(D-ribitylamino)uracil--L-tyrosine 4-hydroxyphenyl transferase 2 of Methanosarcina barkeri (strain Fusaro / DSM 804).